We begin with the raw amino-acid sequence, 778 residues long: NAD-dependent deacetylase sir2B (778 aa).

ANK repeat units follow at residues 83–112 (LNWTPLHVAVSNKSIEVVTLLLERNIEISI), 114–142 (RYTAFHIAACNGDLNIIEKMITMNRVPNG), 148–178 (DMETSLFLSITNNHFEISEKIMDYYQSSMNS), 191–221 (HGVSPLIMSVLRKNLKMIKKLIEEGDADINS), 225–255 (DNSTSLHCAAIIDFTEAIEYLLDIGGIELMN), 260–289 (YGNSPIHEAAIKGNFKSIQTFINQLKKIII), 317–354 (DGSTPLHLCCNCVNSDNIENNLKSCKVLIEEGGVQVNG), 358–390 (GNATALHILACVGEDKSLPLVKYFLSIGSDPTI), and 394–423 (YGWTPIHQAYNNKNIQIYQLLLDHLKLTNS). Residues 438-458 (SSTSTSSSSSSSSSSSSSSSS) form a disordered region. The region spanning 465-778 (KEELKLKGIE…DYFNTLFNSF (314 aa)) is the Deacetylase sirtuin-type domain. The active-site Proton acceptor is the His-608. The Zn(2+) site is built by Cys-616, Cys-619, Cys-642, and Cys-647. The interval 727–746 (KLKQQQENESGESSNDNDNN) is disordered. The span at 733–746 (ENESGESSNDNDNN) shows a compositional bias: low complexity.

This sequence belongs to the sirtuin family. Zn(2+) serves as cofactor.

It catalyses the reaction N(6)-acetyl-L-lysyl-[protein] + NAD(+) + H2O = 2''-O-acetyl-ADP-D-ribose + nicotinamide + L-lysyl-[protein]. Its function is as follows. NAD-dependent deacetylase, which plays an important role in the regulation of transcriptional repression. This chain is NAD-dependent deacetylase sir2B (sir2B), found in Dictyostelium discoideum (Social amoeba).